Reading from the N-terminus, the 366-residue chain is Inactive PGL/p-HBAD biosynthesis glycosyltransferase Mb2982c (366 aa).

Disordered stretches follow at residues methionine 1–alanine 23 and aspartate 295–proline 366. A compositionally biased stretch (basic and acidic residues) spans aspartate 295 to glycine 311.

The protein belongs to the UDP-glycosyltransferase family.

In Mycobacterium bovis (strain ATCC BAA-935 / AF2122/97), this protein is Inactive PGL/p-HBAD biosynthesis glycosyltransferase Mb2982c.